Here is a 473-residue protein sequence, read N- to C-terminus: Knob-associated histidine-rich protein (473 aa).

The N-terminal stretch at 1–34 is a signal peptide; the sequence is MKSFKNKNTLRRKKAFPVFTKILLVSFLVWVLKC. Residue Asn-42 is glycosylated (N-linked (GlcNAc...) asparagine). Positions 57-87 are enriched in basic residues; sequence AQKQHEHHHHHHHQHQHQHQAPHQAHHHHHH. Disordered regions lie at residues 57 to 143 and 347 to 473; these read AQKQ…QVFR and SSVN…DGSK. Residues 95-104 are compositionally biased toward low complexity; the sequence is PQVHQQVHGQ. Residues 108-117 show a composition bias toward basic residues; sequence HHHHHHHHHQ. 2 stretches are compositionally biased toward basic and acidic residues: residues 354–375 and 396–405; these read KHGD…EGEK and KDNEDAESVK. Residues 406–422 show a composition bias toward basic residues; the sequence is SKKHKSHDCEKKKSKKH. Basic and acidic residues-rich tracts occupy residues 423 to 444 and 453 to 473; these read KDNE…GEKH and KTNE…DGSK.

The protein localises to the secreted. KAHRP might mimick human histidine-rich glycoproteins to anchor host thrombospondin or a parasite analog in a binding complex with the endothelial cell receptor. The sequence is that of Knob-associated histidine-rich protein from Plasmodium falciparum.